The sequence spans 271 residues: Shikimate dehydrogenase (NADP(+)) (271 aa).

Shikimate contacts are provided by residues 16 to 18 and Thr63; that span reads SRS. Lys67 acts as the Proton acceptor in catalysis. Asn88 and Asp104 together coordinate shikimate. NADP(+) is bound by residues 128–132, 152–157, and Met215; these read GAGGA and NRTASK. Tyr217 is a shikimate binding site. Gly238 is a binding site for NADP(+).

It belongs to the shikimate dehydrogenase family. In terms of assembly, homodimer.

It carries out the reaction shikimate + NADP(+) = 3-dehydroshikimate + NADPH + H(+). It functions in the pathway metabolic intermediate biosynthesis; chorismate biosynthesis; chorismate from D-erythrose 4-phosphate and phosphoenolpyruvate: step 4/7. Its function is as follows. Involved in the biosynthesis of the chorismate, which leads to the biosynthesis of aromatic amino acids. Catalyzes the reversible NADPH linked reduction of 3-dehydroshikimate (DHSA) to yield shikimate (SA). The polypeptide is Shikimate dehydrogenase (NADP(+)) (Chromohalobacter salexigens (strain ATCC BAA-138 / DSM 3043 / CIP 106854 / NCIMB 13768 / 1H11)).